The primary structure comprises 101 residues: Small ribosomal subunit protein uS10 (101 aa).

Belongs to the universal ribosomal protein uS10 family. Part of the 30S ribosomal subunit.

Its function is as follows. Involved in the binding of tRNA to the ribosomes. This chain is Small ribosomal subunit protein uS10, found in Corynebacterium urealyticum (strain ATCC 43042 / DSM 7109).